The sequence spans 472 residues: Proline--tRNA ligase (472 aa).

Belongs to the class-II aminoacyl-tRNA synthetase family. ProS type 3 subfamily. As to quaternary structure, homodimer.

It localises to the cytoplasm. It catalyses the reaction tRNA(Pro) + L-proline + ATP = L-prolyl-tRNA(Pro) + AMP + diphosphate. In terms of biological role, catalyzes the attachment of proline to tRNA(Pro) in a two-step reaction: proline is first activated by ATP to form Pro-AMP and then transferred to the acceptor end of tRNA(Pro). The protein is Proline--tRNA ligase of Ureaplasma parvum serovar 3 (strain ATCC 27815 / 27 / NCTC 11736).